The sequence spans 641 residues: White-opaque regulator 3 (641 aa).

Positions Ala-13–Ile-27 are enriched in polar residues. Disordered stretches follow at residues Ala-13–Pro-38, Gln-146–Arg-245, and Pro-258–Arg-287. Low complexity-rich tracts occupy residues Pro-28 to Pro-38 and Gln-151 to Asn-160. Positions Arg-161 to Thr-172 are enriched in polar residues. Over residues Asn-173–Asn-184 the composition is skewed to low complexity. Residues Ser-193 to Ser-204 show a composition bias toward polar residues. Low complexity-rich tracts occupy residues Gln-216–Pro-242 and Ser-264–Ser-280. A dksA C4-type zinc finger spans residues Cys-317–Cys-337. 4 disordered regions span residues Leu-366–Gln-409, Met-480–His-507, Asn-522–Ser-550, and Leu-568–Asn-641. The span at Gln-379–Ala-400 shows a compositional bias: basic and acidic residues. Residues Gln-486–Leu-495 show a composition bias toward pro residues. Residues Asn-522–Asn-533 show a composition bias toward polar residues. Residues Gln-569–Gln-579 are compositionally biased toward low complexity. Over residues Ser-597–Leu-606 the composition is skewed to pro residues. Low complexity predominate over residues Gln-610–Asn-641.

The protein resides in the nucleus. Its function is as follows. Transcription factor that modulates the white-opaque switch. The polypeptide is White-opaque regulator 3 (WOR3) (Candida albicans (strain SC5314 / ATCC MYA-2876) (Yeast)).